The primary structure comprises 368 residues: tRNA-specific 2-thiouridylase MnmA (368 aa).

ATP contacts are provided by residues 11 to 18 (GMSGGVDS) and M37. Residues 97-99 (NPD) are interaction with target base in tRNA. Catalysis depends on C102, which acts as the Nucleophile. The cysteines at positions 102 and 199 are disulfide-linked. Residue G127 coordinates ATP. The interaction with tRNA stretch occupies residues 149 to 151 (KDQ). C199 serves as the catalytic Cysteine persulfide intermediate. The segment at 311-312 (RY) is interaction with tRNA.

The protein belongs to the MnmA/TRMU family. As to quaternary structure, interacts with TusE.

The protein localises to the cytoplasm. The catalysed reaction is S-sulfanyl-L-cysteinyl-[protein] + uridine(34) in tRNA + AH2 + ATP = 2-thiouridine(34) in tRNA + L-cysteinyl-[protein] + A + AMP + diphosphate + H(+). Its function is as follows. Catalyzes the 2-thiolation of uridine at the wobble position (U34) of tRNA(Lys), tRNA(Glu) and tRNA(Gln), leading to the formation of s(2)U34, the first step of tRNA-mnm(5)s(2)U34 synthesis. Sulfur is provided by IscS, via a sulfur-relay system. Binds ATP and its substrate tRNAs. This is tRNA-specific 2-thiouridylase MnmA from Shigella dysenteriae serotype 1 (strain Sd197).